Reading from the N-terminus, the 145-residue chain is Basic phospholipase A2 P'513 (145 aa).

Residues 1–21 form the signal peptide; the sequence is MYPAHLLLLLAVCVSLLGASA. Positions 22–27 are excised as a propeptide; the sequence is IPPLPL. Intrachain disulfides connect C38/C98, C54/C144, C56/C72, C71/C125, C78/C118, C87/C111, and C105/C116. Ca(2+) is bound by residues Y55, G57, and G59. H75 is an active-site residue. A Ca(2+)-binding site is contributed by D76. Residue D119 is part of the active site.

Belongs to the phospholipase A2 family. Group I subfamily. D49 sub-subfamily. It depends on Ca(2+) as a cofactor. As to expression, expressed by the venom gland.

It localises to the secreted. It carries out the reaction a 1,2-diacyl-sn-glycero-3-phosphocholine + H2O = a 1-acyl-sn-glycero-3-phosphocholine + a fatty acid + H(+). In terms of biological role, PLA2 catalyzes the calcium-dependent hydrolysis of the 2-acyl groups in 3-sn-phosphoglycerides. The chain is Basic phospholipase A2 P'513 from Laticauda laticaudata (Blue-ringed sea krait).